The sequence spans 319 residues: Protein-methionine methyltransferase laeA (319 aa).

The tract at residues 269–293 is disordered; that stretch reads REPQSGTCSVQRENGANGDRSTLSA. Over residues 270-293 the composition is skewed to polar residues; the sequence is EPQSGTCSVQRENGANGDRSTLSA.

It belongs to the methyltransferase superfamily. LaeA methyltransferase family. Component of the heterotrimeric velvet complex composed of laeA, veA and velB; VeA acting as a bridging protein between laeA and velB.

It localises to the nucleus. The catalysed reaction is L-methionyl-[protein] + S-adenosyl-L-methionine = S-methyl-L-methionyl-[protein] + S-adenosyl-L-homocysteine. Functionally, methyltransferase; component of the velvet transcription factor complex that acts as a global regulator for secondary metabolite gene expression. Controls the expression of the chaetoglobosin A biosynthesis cluster via the cheR transcription factor and the subsequent production of chaetoglobosin A. Positively regulates the expression of smtA and negatively regulates the expression of velB. LaeA also regulates pigmentation and spores production. The chain is Protein-methionine methyltransferase laeA from Chaetomium globosum (strain ATCC 6205 / CBS 148.51 / DSM 1962 / NBRC 6347 / NRRL 1970) (Soil fungus).